The primary structure comprises 214 residues: tRNA (guanine-N(7)-)-methyltransferase (214 aa).

4 residues coordinate S-adenosyl-L-methionine: E43, E68, D95, and D117. The active site involves D117. Substrate contacts are provided by residues K121, D153, and 191-194; that span reads TEYE.

The protein belongs to the class I-like SAM-binding methyltransferase superfamily. TrmB family.

The enzyme catalyses guanosine(46) in tRNA + S-adenosyl-L-methionine = N(7)-methylguanosine(46) in tRNA + S-adenosyl-L-homocysteine. It participates in tRNA modification; N(7)-methylguanine-tRNA biosynthesis. Functionally, catalyzes the formation of N(7)-methylguanine at position 46 (m7G46) in tRNA. The chain is tRNA (guanine-N(7)-)-methyltransferase from Brevibacillus brevis (strain 47 / JCM 6285 / NBRC 100599).